The sequence spans 251 residues: Dihydroorotate dehydrogenase B (NAD(+)), electron transfer subunit homolog (251 aa).

Residues 2-101 (LAELNAEVLE…FLPLGKRLFS (100 aa)) form the FAD-binding FR-type domain. [2Fe-2S] cluster contacts are provided by Cys217, Cys222, Cys225, and Cys238.

This sequence belongs to the PyrK family. [2Fe-2S] cluster is required as a cofactor. FAD serves as cofactor.

This Aquifex aeolicus (strain VF5) protein is Dihydroorotate dehydrogenase B (NAD(+)), electron transfer subunit homolog.